Consider the following 556-residue polypeptide: Formate--tetrahydrofolate ligase (556 aa).

ATP is bound at residue 65–72; it reads TPAGEGKT.

It belongs to the formate--tetrahydrofolate ligase family.

The catalysed reaction is (6S)-5,6,7,8-tetrahydrofolate + formate + ATP = (6R)-10-formyltetrahydrofolate + ADP + phosphate. Its pathway is one-carbon metabolism; tetrahydrofolate interconversion. The protein is Formate--tetrahydrofolate ligase of Clostridium cylindrosporum.